Reading from the N-terminus, the 74-residue chain is DNA-directed RNA polymerase subunit omega (74 aa).

Belongs to the RNA polymerase subunit omega family. As to quaternary structure, the RNAP catalytic core consists of 2 alpha, 1 beta, 1 beta' and 1 omega subunit. When a sigma factor is associated with the core the holoenzyme is formed, which can initiate transcription.

The catalysed reaction is RNA(n) + a ribonucleoside 5'-triphosphate = RNA(n+1) + diphosphate. In terms of biological role, promotes RNA polymerase assembly. Latches the N- and C-terminal regions of the beta' subunit thereby facilitating its interaction with the beta and alpha subunits. The polypeptide is DNA-directed RNA polymerase subunit omega (Campylobacter jejuni subsp. jejuni serotype O:6 (strain 81116 / NCTC 11828)).